A 721-amino-acid chain; its full sequence is Polyribonucleotide nucleotidyltransferase (721 aa).

Mg(2+) is bound by residues Asp-490 and Asp-496. One can recognise a KH domain in the interval 557–618; it reads PRILTLKINP…EAVRQKIEGL (62 aa). Positions 625–693 constitute an S1 motif domain; that stretch reads GEEYEGTVVK…DRGKIDLIRP (69 aa). The tract at residues 696-721 is disordered; the sequence is EGKIAPREPRAARAGGDRGGRPPRRE.

It belongs to the polyribonucleotide nucleotidyltransferase family. Mg(2+) serves as cofactor.

The protein resides in the cytoplasm. The enzyme catalyses RNA(n+1) + phosphate = RNA(n) + a ribonucleoside 5'-diphosphate. Involved in mRNA degradation. Catalyzes the phosphorolysis of single-stranded polyribonucleotides processively in the 3'- to 5'-direction. The polypeptide is Polyribonucleotide nucleotidyltransferase (Deinococcus geothermalis (strain DSM 11300 / CIP 105573 / AG-3a)).